The following is a 155-amino-acid chain: MASQQKVVEIYTDGACSGNPGVGGWGAILRWNGHERELYGGNAHTTNNQMELMAAICALKALKEPCLVDLYTDSVYVRNGISKWIEGWKKNNWRTASKSPVKNMELWQTLEDACSCHAVRWHWVKGHAGHPENERADALARKAIAQYRENGRFPT.

Positions 4–145 (QQKVVEIYTD…ADALARKAIA (142 aa)) constitute an RNase H type-1 domain. Residues Asp-13, Glu-51, Asp-73, and Asp-137 each contribute to the Mg(2+) site.

The protein belongs to the RNase H family. Monomer. Requires Mg(2+) as cofactor.

The protein resides in the cytoplasm. It catalyses the reaction Endonucleolytic cleavage to 5'-phosphomonoester.. Functionally, endonuclease that specifically degrades the RNA of RNA-DNA hybrids. The protein is Ribonuclease H of Bartonella tribocorum (strain CIP 105476 / IBS 506).